The sequence spans 53 residues: MKLTAVLMVAVLVLTACQLITANECSRKGEWCGLESVLCCNGGSWNCWFVCTA.

An N-terminal signal peptide occupies residues 1 to 22 (MKLTAVLMVAVLVLTACQLITA). Disulfide bonds link Cys25–Cys40, Cys32–Cys47, and Cys39–Cys51.

Belongs to the conotoxin O1 superfamily. As to expression, expressed by the venom duct.

The protein resides in the secreted. Its function is as follows. Probable neurotoxin. The chain is Conotoxin Cal6.23 from Californiconus californicus (California cone).